The sequence spans 1068 residues: MAPRKRSHHGLGFLCCFGGSDIPEINLRDNHPLQFMEFSSPIPNAEELNIRFAELVDELDLTDKNREAMFALPPEKKWQIYCSKKKEQEDPNKLATSWPDYYIDRINSMAAMQSLYAFDEEETEMRNQVVEDLKTALRTQPMRFVTRFIELEGLTCLLNFLRSMDHATCESRIHTSLIGCIKALMNNSQGRAHVLAQPEAISTIAQSLRTENSKTKVAVLEILGAVCLVPGGHKKVLQAMLHYQVYAAERTRFQTLLNELDRSLGRYRDEVNLKTAIMSFINAVLNAGAGEDNLEFRLHLRYEFLMLGIQPVIDKLRQHENAILDKHLDFFEMVRNEDDLELARRFDMVHIDTKSASQMFELIHKKLKYTEAYPCLLSVLHHCLQMPYKRNGGYFQQWQLLDRILQQIVLQDERGVDPDLAPLENFNVKNIVNMLINENEVKQWRDQAEKFRKEHMELVSRLERKERECETKTLEKEEMMRTLNKMKDKLARESQELRQARGQVAELVAQLSELSTGPVSSPPPPGGPLTLSSSMTTNDLPPPPPPLPFACCPPPPPPPLPPGGPPTPPGAPPCLGMGLPLPQDPYPSSDVPLRKKRVPQPSHPLKSFNWVKLNEERVPGTVWNEIDDMQVFRILDLEDFEKMFSAYQRHQKELGSTEDIYLASRKVKELSVIDGRRAQNCIILLSKLKLSNEEIRQAILKMDEQEDLAKDMLEQLLKFIPEKSDIDLLEEHKHEIERMARADRFLYEMSRIDHYQQRLQALFFKKKFQERLAEAKPKVEAILLASRELVRSKRLRQMLEVILAIGNFMNKGQRGGAYGFRVASLNKIADTKSSIDRNISLLHYLIMILEKHFPDILNMPSELQHLPEAAKVNLAELEKEVGNLRRGLRAVEVELEYQRRQVREPSDKFVPVMSDFITVSSFSFSELEDQLNEARDKFAKALMHFGEHDSKMQPDEFFGIFDTFLQAFSEARQDLEAMRRRKEEEERRARMEAMLKEQRERERWQRQRKVLAAGSSLEEGGEFDDLVSALRSGEVFDKDLCKLKRSRKRSGSQALEVTRERAINRLNY.

Residues 40–416 (SPIPNAEELN…QIVLQDERGV (377 aa)) form the GBD/FH3 domain. Residues 434–516 (MLINENEVKQ…LVAQLSELST (83 aa)) are a coiled coil. The disordered stretch occupies residues 514–586 (LSTGPVSSPP…MGLPLPQDPY (73 aa)). Residues 518–594 (PVSSPPPPGG…PYPSSDVPLR (77 aa)) form the FH1 domain. Positions 540–572 (LPPPPPPLPFACCPPPPPPPLPPGGPPTPPGAP) are enriched in pro residues. The FH2 domain maps to 595–994 (KKRVPQPSHP…EERRARMEAM (400 aa)). Residue S1015 is modified to Phosphoserine. Residues 1016–1048 (SLEEGGEFDDLVSALRSGEVFDKDLCKLKRSRK) form the DAD domain.

It belongs to the formin homology family. Interacts with DVL3. Interacts with INF2. Expressed in most tissues examined. Expressed in kidney glomeruli.

Functionally, key regulator of the Wnt signaling pathway, which is required for various processes during development, such as dorsal patterning, determination of left/right symmetry or myelination in the central nervous system. Acts downstream of Wnt ligands and upstream of beta-catenin (CTNNB1). Required for canonical Wnt signaling pathway during patterning in the dorsal spinal cord by promoting the aggregation of Disheveled (Dvl) complexes, thereby clustering and formation of Wnt receptor signalosomes and potentiating Wnt activity. During dorsal patterning of the spinal cord, inhibits oligodendrocytes differentiation via interaction with PIP5K1A. Also regulates non-canonical Wnt signaling pathway. Acts downstream of PITX2 in the developing gut and is required for left/right asymmetry within dorsal mesentery: affects mesenchymal condensation by lengthening cadherin-based junctions through WNT5A and non-canonical Wnt signaling, inducing polarized condensation in the left dorsal mesentery necessary to initiate gut rotation. Together with DAAM1, required for myocardial maturation and sarcomere assembly. Is a regulator of actin nucleation and elongation, filopodia formation and podocyte migration. The protein is Disheveled-associated activator of morphogenesis 2 of Homo sapiens (Human).